The primary structure comprises 248 residues: DNA repair protein RecO (248 aa).

It belongs to the RecO family.

Its function is as follows. Involved in DNA repair and RecF pathway recombination. In Chelativorans sp. (strain BNC1), this protein is DNA repair protein RecO.